Reading from the N-terminus, the 21-residue chain is Thylakoid lumenal 13.8 kDa protein (21 aa).

It localises to the plastid. Its subcellular location is the chloroplast thylakoid lumen. This is Thylakoid lumenal 13.8 kDa protein from Spinacia oleracea (Spinach).